A 142-amino-acid chain; its full sequence is Large ribosomal subunit protein uL11 (142 aa).

It belongs to the universal ribosomal protein uL11 family. Part of the ribosomal stalk of the 50S ribosomal subunit. Interacts with L10 and the large rRNA to form the base of the stalk. L10 forms an elongated spine to which L12 dimers bind in a sequential fashion forming a multimeric L10(L12)X complex. Post-translationally, one or more lysine residues are methylated.

Functionally, forms part of the ribosomal stalk which helps the ribosome interact with GTP-bound translation factors. This is Large ribosomal subunit protein uL11 from Mycobacteroides abscessus (strain ATCC 19977 / DSM 44196 / CCUG 20993 / CIP 104536 / JCM 13569 / NCTC 13031 / TMC 1543 / L948) (Mycobacterium abscessus).